Consider the following 178-residue polypeptide: ATP-dependent protease subunit HslV (178 aa).

The active site involves threonine 7. Residues glycine 162, cysteine 165, and threonine 168 each coordinate Na(+).

Belongs to the peptidase T1B family. HslV subfamily. A double ring-shaped homohexamer of HslV is capped on each side by a ring-shaped HslU homohexamer. The assembly of the HslU/HslV complex is dependent on binding of ATP.

The protein resides in the cytoplasm. It carries out the reaction ATP-dependent cleavage of peptide bonds with broad specificity.. Its activity is regulated as follows. Allosterically activated by HslU binding. Protease subunit of a proteasome-like degradation complex believed to be a general protein degrading machinery. The chain is ATP-dependent protease subunit HslV from Burkholderia orbicola (strain AU 1054).